Consider the following 193-residue polypeptide: Ion-translocating oxidoreductase complex subunit B (193 aa).

The interval 1–26 (MSTMLIAVILLTLLALFFGVLLGFAA) is hydrophobic. A 4Fe-4S domain is found at 32–90 (EGNPIVDELEAILPQTQCGQCGYPGCRPYAEAIANGDKVNKCPPGGTATMEKLASLMGV). [4Fe-4S] cluster contacts are provided by Cys49, Cys52, Cys57, Cys73, Cys114, Cys117, Cys120, Cys124, Cys144, Cys147, Cys150, and Cys154. 2 consecutive 4Fe-4S ferredoxin-type domains span residues 105 to 134 (KVAY…GAGK) and 136 to 164 (MHTV…MVPV).

The protein belongs to the 4Fe4S bacterial-type ferredoxin family. RnfB subfamily. In terms of assembly, the complex is composed of six subunits: RnfA, RnfB, RnfC, RnfD, RnfE and RnfG. [4Fe-4S] cluster serves as cofactor.

The protein localises to the cell inner membrane. Functionally, part of a membrane-bound complex that couples electron transfer with translocation of ions across the membrane. This is Ion-translocating oxidoreductase complex subunit B from Shewanella oneidensis (strain ATCC 700550 / JCM 31522 / CIP 106686 / LMG 19005 / NCIMB 14063 / MR-1).